We begin with the raw amino-acid sequence, 887 residues long: Alanine--tRNA ligase (887 aa).

Residues His-564, His-568, Cys-676, and His-680 each coordinate Zn(2+).

It belongs to the class-II aminoacyl-tRNA synthetase family. Zn(2+) serves as cofactor.

It localises to the cytoplasm. It carries out the reaction tRNA(Ala) + L-alanine + ATP = L-alanyl-tRNA(Ala) + AMP + diphosphate. Catalyzes the attachment of alanine to tRNA(Ala) in a two-step reaction: alanine is first activated by ATP to form Ala-AMP and then transferred to the acceptor end of tRNA(Ala). Also edits incorrectly charged Ser-tRNA(Ala) and Gly-tRNA(Ala) via its editing domain. This chain is Alanine--tRNA ligase, found in Chelativorans sp. (strain BNC1).